The following is a 220-amino-acid chain: Deoxyribose-phosphate aldolase (220 aa).

Aspartate 89 acts as the Proton donor/acceptor in catalysis. The active-site Schiff-base intermediate with acetaldehyde is lysine 151. Lysine 180 acts as the Proton donor/acceptor in catalysis.

The protein belongs to the DeoC/FbaB aldolase family. DeoC type 1 subfamily.

It localises to the cytoplasm. It carries out the reaction 2-deoxy-D-ribose 5-phosphate = D-glyceraldehyde 3-phosphate + acetaldehyde. Its pathway is carbohydrate degradation; 2-deoxy-D-ribose 1-phosphate degradation; D-glyceraldehyde 3-phosphate and acetaldehyde from 2-deoxy-alpha-D-ribose 1-phosphate: step 2/2. Functionally, catalyzes a reversible aldol reaction between acetaldehyde and D-glyceraldehyde 3-phosphate to generate 2-deoxy-D-ribose 5-phosphate. The chain is Deoxyribose-phosphate aldolase from Streptococcus mutans serotype c (strain ATCC 700610 / UA159).